We begin with the raw amino-acid sequence, 332 residues long: L-lactate dehydrogenase A-like 6A (332 aa).

The residue at position 2 (alanine 2) is an N-acetylalanine. Residues lysine 5 and lysine 57 each carry the N6-acetyllysine; alternate modification. Lysine 5 carries the N6-succinyllysine; alternate modification. 29–57 contributes to the NAD(+) binding site; sequence GSVGVACAISILLKGLSDELVLVDVDEGK. A Glycyl lysine isopeptide (Lys-Gly) (interchain with G-Cter in SUMO2); alternate cross-link involves residue lysine 57. Lysine 81 carries the N6-acetyllysine modification. Arginine 99 is a binding site for NAD(+). Arginine 106 contacts substrate. Lysine 118 carries the post-translational modification N6-acetyllysine; alternate. Lysine 118 bears the N6-succinyllysine; alternate mark. Asparagine 138 contacts NAD(+). Asparagine 138 and arginine 169 together coordinate substrate. The active-site Proton acceptor is the histidine 193. N6-acetyllysine is present on lysine 232. Position 239 is a phosphotyrosine (tyrosine 239). The residue at position 243 (lysine 243) is an N6-acetyllysine. Threonine 248 lines the substrate pocket. At threonine 309 the chain carries Phosphothreonine. Residue lysine 318 is modified to N6-acetyllysine; alternate. Lysine 318 is subject to N6-succinyllysine; alternate. Threonine 322 is subject to Phosphothreonine.

This sequence belongs to the LDH/MDH superfamily. LDH family. Testis-specific.

The protein resides in the cytoplasm. It carries out the reaction (S)-lactate + NAD(+) = pyruvate + NADH + H(+). Its pathway is fermentation; pyruvate fermentation to lactate; (S)-lactate from pyruvate: step 1/1. In terms of biological role, catalyzes the interconversion of L-lactate and pyruvate with nicotinamide adenine dinucleotide NAD(+) as a coenzyme. Significantly increases the transcriptional activity of JUN, when overexpressed. This Homo sapiens (Human) protein is L-lactate dehydrogenase A-like 6A (LDHAL6A).